Reading from the N-terminus, the 347-residue chain is MVFDVWKSLKKGEVHPVYCLYGKETYLLQETVSRIRQTVVDQETKDFNLSVFDLEEDPLDQAIADAETFPFMGERRLVIVKNPYFLTGEKKKEKIEHNVSALESYIQSPAPYTVFVLLAPYEKLDERKKLTKALKKHAFMMEAKELNAKETTDFTVNLAKTEQKTIGTEAAEHLVLLVNGHLSSIFQEIQKLCTFIGDREEITLDDVKMLVARSLEQNIFELINKIVNRKRTESLQIFYDLLKQNEEPIKIMALISNQFRLILQTKYFAEQGYGQKQIASNLKVHPFRVKLAMDQARLFSEEELRLIIEQLAVMDYEMKTGKKDKQLLLELFLLQLLKRNEKNDPHY.

The protein belongs to the DNA polymerase HolA subunit family. In terms of assembly, component of the DNA clamp loading complex consisting of tau(3):delta(1):delta'(1). The DNA polymerase III holoenzyme complex contains at least 10 different subunits organized into 3 functionally essential subassemblies: the Pol III core, the beta sliding clamp processivity factor and the clamp-loading complex. The Pol III core (subunits alpha, epsilon and theta) contains the polymerase and the 3'-5' exonuclease proofreading activities. The polymerase is tethered to the template via the dimeric beta sliding clamp processivity factor. The DNA clamp-loading complex assembles the beta sliding clamp onto the primed template and plays a central role in the organization and communication at the replication fork.

The protein localises to the cytoplasm. It localises to the nucleoid. It carries out the reaction DNA(n) + a 2'-deoxyribonucleoside 5'-triphosphate = DNA(n+1) + diphosphate. Functionally, part of the beta sliding clamp loading complex, which hydrolyzes ATP to load the beta clamp onto primed DNA to form the DNA replication pre-initiation complex. DNA polymerase III is a complex, multichain enzyme responsible for most of the replicative synthesis in bacteria. This DNA polymerase also exhibits 3'-5' exonuclease activity. The delta subunit is the wrench that will open the beta subunit dimer. The DNA clamp loading complex (tau(3),delta,delta') is thought to load beta dimers onto DNA by binding ATP which alters the complex's conformation so it can bind beta sliding clamp dimers and open them at one interface. Primed DNA is recognized, ATP is hydrolyzed releasing the clamp loading complex and closing the beta sliding clamp ring around the primed DNA. In Bacillus subtilis (strain 168), this protein is DNA polymerase III subunit delta.